The sequence spans 98 residues: MPSIYVNIFLAFIFALLGMLIYRSHLMSSLLCLEGMMLSLFILITLTALNMHFTLSFMFPIVLLVFAACEAAIGLALLVMVSNTYGMDYVQNLNLLQC.

Helical transmembrane passes span 1–21 (MPSI…GMLI), 29–49 (SLLC…LTAL), and 61–81 (IVLL…LVMV).

It belongs to the complex I subunit 4L family. Core subunit of respiratory chain NADH dehydrogenase (Complex I) which is composed of 45 different subunits.

The protein resides in the mitochondrion inner membrane. The catalysed reaction is a ubiquinone + NADH + 5 H(+)(in) = a ubiquinol + NAD(+) + 4 H(+)(out). Its function is as follows. Core subunit of the mitochondrial membrane respiratory chain NADH dehydrogenase (Complex I) which catalyzes electron transfer from NADH through the respiratory chain, using ubiquinone as an electron acceptor. Part of the enzyme membrane arm which is embedded in the lipid bilayer and involved in proton translocation. The chain is NADH-ubiquinone oxidoreductase chain 4L (MT-ND4L) from Lepus europaeus (European hare).